A 233-amino-acid chain; its full sequence is Large ribosomal subunit protein uL22m (233 aa).

The protein belongs to the universal ribosomal protein uL22 family. In terms of assembly, component of the mitochondrial ribosome large subunit (39S) which comprises a 16S rRNA and about 50 distinct proteins.

The protein localises to the mitochondrion. This Drosophila pseudoobscura pseudoobscura (Fruit fly) protein is Large ribosomal subunit protein uL22m (mRpL22).